A 165-amino-acid polypeptide reads, in one-letter code: MSDTAVADTRRLNSKPQDLTDAYGPPSNFLEIDIFNPQTVGVGRARFTTYEVRMRTNLPIFKLKESCVRRRYSDFEWLKNELERDSKIVVPPLPGKALKRHPFRGDEGIFEESFIEERRQGLEQFINKIAGHPLAQNERCLHMFLQEEAIDRNYVAGKVLGEKDC.

A disordered region spans residues 1–20 (MSDTAVADTRRLNSKPQDLT). The residue at position 2 (serine 2) is an N-acetylserine. Tyrosine 23 bears the Phosphotyrosine mark. One can recognise a PX domain in the interval 28–151 (NFLEIDIFNP…HMFLQEEAID (124 aa)). 4 residues coordinate a 1,2-diacyl-sn-glycero-3-phospho-(1D-myo-inositol-3-phosphate): arginine 71, serine 73, lysine 96, and arginine 118. Position 73 is a phosphoserine (serine 73).

It belongs to the sorting nexin family.

It localises to the membrane. Its function is as follows. May be involved in several stages of intracellular trafficking. The protein is Sorting nexin-12 (Snx12) of Mus musculus (Mouse).